Reading from the N-terminus, the 51-residue chain is Insulin (51 aa).

3 disulfide bridges follow: C8/C37, C20/C50, and C36/C41.

This sequence belongs to the insulin family. As to quaternary structure, heterodimer of a B chain and an A chain linked by two disulfide bonds.

Its subcellular location is the secreted. In terms of biological role, insulin decreases blood glucose concentration. It increases cell permeability to monosaccharides, amino acids and fatty acids. It accelerates glycolysis, the pentose phosphate cycle, and glycogen synthesis in liver. This chain is Insulin, found in Pagrus major (Red sea bream).